A 98-amino-acid polypeptide reads, in one-letter code: NADH-ubiquinone oxidoreductase chain 4L (98 aa).

The next 3 helical transmembrane spans lie at 1–21, 28–48, and 59–79; these read MTSI…GVLI, STLL…ALLI, and APII…ALLV.

This sequence belongs to the complex I subunit 4L family. In terms of assembly, core subunit of respiratory chain NADH dehydrogenase (Complex I) which is composed of 45 different subunits.

It localises to the mitochondrion inner membrane. It carries out the reaction a ubiquinone + NADH + 5 H(+)(in) = a ubiquinol + NAD(+) + 4 H(+)(out). In terms of biological role, core subunit of the mitochondrial membrane respiratory chain NADH dehydrogenase (Complex I) which catalyzes electron transfer from NADH through the respiratory chain, using ubiquinone as an electron acceptor. Part of the enzyme membrane arm which is embedded in the lipid bilayer and involved in proton translocation. This Trichosurus vulpecula (Brush-tailed possum) protein is NADH-ubiquinone oxidoreductase chain 4L (MT-ND4L).